A 475-amino-acid chain; its full sequence is NAD-dependent histone deacetylase sir2 (475 aa).

Polar residues predominate over residues 1–12; sequence MASNPLDNNMPT. The interval 1–35 is disordered; it reads MASNPLDNNMPTTPVEEKIPVASYSPSSSGSSSGA. Over residues 20 to 35 the composition is skewed to low complexity; sequence PVASYSPSSSGSSSGA. A Phosphoserine modification is found at Ser55. The Deacetylase sirtuin-type domain occupies 139–436; the sequence is KLPHFNTFED…AGWLNELQAL (298 aa). Residues 164-183 and 246-249 each bind NAD(+); these read GAGI…NGFY and QNID. The Proton acceptor role is filled by His266. The Zn(2+) site is built by Cys274, Cys277, Cys298, and Cys301. Residues 373–375, 398–400, and Cys416 contribute to the NAD(+) site; these read GTS and SRT.

The protein belongs to the sirtuin family. Class I subfamily. It depends on Zn(2+) as a cofactor.

The protein localises to the nucleus. Its subcellular location is the chromosome. It is found in the centromere. It localises to the telomere. The catalysed reaction is N(6)-acetyl-L-lysyl-[protein] + NAD(+) + H2O = 2''-O-acetyl-ADP-D-ribose + nicotinamide + L-lysyl-[protein]. Involved in silencing within the mating-type region, at the telomeres, and according to PubMed:12867036 also within centromeric DNA regions. Required for the localization of swi6 to the telomeres, silent mating type region, and according to PubMed:12867036 to the centromeric DNA regions. According to PubMed:15545655 not required for the localization of swi6 to centromeric foci. Deacetylates histone H3 on 'Lys-9' and 'Lys-16' of histone H4. This has a direct role in heterochromatin assembly. The protein is NAD-dependent histone deacetylase sir2 (sir2) of Schizosaccharomyces pombe (strain 972 / ATCC 24843) (Fission yeast).